A 313-amino-acid chain; its full sequence is Caffeic acid 3-O-methyltransferase (313 aa).

112–118 (IDQDRVF) contacts substrate. The segment at 144 to 162 (AFDYPGTDPRFNKIFNRAM) is substrate binding. Gly190, Asp213, Asp233, Met234, and Lys247 together coordinate S-adenosyl-L-methionine. Residue His251 is the Proton acceptor of the active site.

Belongs to the class I-like SAM-binding methyltransferase superfamily. Cation-independent O-methyltransferase family. COMT subfamily. Homodimer.

The enzyme catalyses (E)-caffeate + S-adenosyl-L-methionine = (E)-ferulate + S-adenosyl-L-homocysteine + H(+). It participates in aromatic compound metabolism; phenylpropanoid biosynthesis. Functionally, catalyzes the conversion of caffeic acid to ferulic acid and of 5-hydroxyferulic acid to sinapic acid. The resulting products may subsequently be converted to the corresponding alcohols that are incorporated into lignins. The protein is Caffeic acid 3-O-methyltransferase (COMT1) of Eucalyptus globulus (Tasmanian blue gum).